Reading from the N-terminus, the 328-residue chain is uncharacterized protein (328 aa).

Residues 1 to 24 (MKSIKGLGKLLLASSILFSSSAFA) form the signal peptide.

The protein belongs to the bacterial solute-binding protein 7 family.

The protein resides in the periplasm. This is an uncharacterized protein from Haemophilus influenzae (strain ATCC 51907 / DSM 11121 / KW20 / Rd).